Consider the following 445-residue polypeptide: Tubulin beta-4 chain (445 aa).

Positions 1 to 4 (MREI) match the MREI motif motif. Positions 11, 69, 138, 142, 143, 144, 204, and 226 each coordinate GTP. Residue E69 coordinates Mg(2+). The disordered stretch occupies residues 425–445 (YQDATAEEEGEFEEGEEEENA). Residues 429-445 (TAEEEGEFEEGEEEENA) show a composition bias toward acidic residues. 5-glutamyl polyglutamate is present on E438.

It belongs to the tubulin family. In terms of assembly, dimer of alpha and beta chains. A typical microtubule is a hollow water-filled tube with an outer diameter of 25 nm and an inner diameter of 15 nM. Alpha-beta heterodimers associate head-to-tail to form protofilaments running lengthwise along the microtubule wall with the beta-tubulin subunit facing the microtubule plus end conferring a structural polarity. Microtubules usually have 13 protofilaments but different protofilament numbers can be found in some organisms and specialized cells. Mg(2+) is required as a cofactor. In terms of processing, some glutamate residues at the C-terminus are polyglycylated, resulting in polyglycine chains on the gamma-carboxyl group. Glycylation is mainly limited to tubulin incorporated into axonemes (cilia and flagella) whereas glutamylation is prevalent in neuronal cells, centrioles, axonemes, and the mitotic spindle. Both modifications can coexist on the same protein on adjacent residues, and lowering polyglycylation levels increases polyglutamylation, and reciprocally. The precise function of polyglycylation is still unclear. Post-translationally, some glutamate residues at the C-terminus are polyglutamylated, resulting in polyglutamate chains on the gamma-carboxyl group. Polyglutamylation plays a key role in microtubule severing by spastin (SPAST). SPAST preferentially recognizes and acts on microtubules decorated with short polyglutamate tails: severing activity by SPAST increases as the number of glutamates per tubulin rises from one to eight, but decreases beyond this glutamylation threshold. As to expression, preferential expression in germ cells.

Its subcellular location is the cytoplasm. It is found in the cytoskeleton. Its function is as follows. Tubulin is the major constituent of microtubules, a cylinder consisting of laterally associated linear protofilaments composed of alpha- and beta-tubulin heterodimers. Microtubules grow by the addition of GTP-tubulin dimers to the microtubule end, where a stabilizing cap forms. Below the cap, tubulin dimers are in GDP-bound state, owing to GTPase activity of alpha-tubulin. The protein is Tubulin beta-4 chain (tubb4) of Xenopus laevis (African clawed frog).